The primary structure comprises 540 residues: Acetyl-coenzyme A carboxylase carboxyl transferase subunit beta, chloroplastic (540 aa).

Positions 229–249 (YSDNGSSSIRTRTSTSSGSSY) are disordered. Low complexity predominate over residues 233–248 (GSSSIRTRTSTSSGSS). In terms of domain architecture, CoA carboxyltransferase N-terminal spans 267–538 (LWVQCENCYA…TFHPLKSNKV (272 aa)). Residues Cys271, Cys274, Cys290, and Cys293 each contribute to the Zn(2+) site. The C4-type zinc-finger motif lies at 271–293 (CENCYALNYNKLFRSKMNVCEQC).

It belongs to the AccD/PCCB family. In terms of assembly, acetyl-CoA carboxylase is a heterohexamer composed of biotin carboxyl carrier protein, biotin carboxylase and 2 subunits each of ACCase subunit alpha and ACCase plastid-coded subunit beta (accD). Requires Zn(2+) as cofactor.

It localises to the plastid. The protein localises to the chloroplast stroma. It catalyses the reaction N(6)-carboxybiotinyl-L-lysyl-[protein] + acetyl-CoA = N(6)-biotinyl-L-lysyl-[protein] + malonyl-CoA. It functions in the pathway lipid metabolism; malonyl-CoA biosynthesis; malonyl-CoA from acetyl-CoA: step 1/1. Component of the acetyl coenzyme A carboxylase (ACC) complex. Biotin carboxylase (BC) catalyzes the carboxylation of biotin on its carrier protein (BCCP) and then the CO(2) group is transferred by the transcarboxylase to acetyl-CoA to form malonyl-CoA. In Amborella trichopoda, this protein is Acetyl-coenzyme A carboxylase carboxyl transferase subunit beta, chloroplastic.